We begin with the raw amino-acid sequence, 20 residues long: Expansin-B (20 aa).

Positions 1–20 are disordered; sequence GPPKVAPGKXISASFGGEWL.

Belongs to the expansin family. Expansin B subfamily.

It is found in the secreted. Its subcellular location is the cell wall. The protein localises to the membrane. In terms of biological role, may aid fertilization by loosening the cell wall of the stigma and style, thereby facilitating penetration of the pollen tube. Acts selectively on grass cell walls, which are relatively poor in pectins and xyloglucans and rich in glucuronoarabinoxylans and (1-3),(1-4)-beta-D-glucans, when compared with cell walls of other angiosperms, including other monocots. The polypeptide is Expansin-B (Paspalum notatum (Bahia grass)).